Consider the following 254-residue polypeptide: Probable protein ABIL5 (254 aa).

The interval 1 to 26 (MEVAEAGVDGVAGRRQQEEASGAAPF) is disordered.

This sequence belongs to the ABI family. In terms of assembly, binds SCAR.

It is found in the cytoplasm. The protein resides in the cytoskeleton. Functionally, involved in regulation of actin and microtubule organization. Part of a WAVE complex that activates the Arp2/3 complex. The protein is Probable protein ABIL5 of Oryza sativa subsp. japonica (Rice).